We begin with the raw amino-acid sequence, 215 residues long: 2-dehydro-3-deoxy-phosphogluconate aldolase (215 aa).

Glu46 acts as the Proton acceptor in catalysis. The pyruvate site is built by Arg50, Thr74, and Lys134. Lys134 functions as the Schiff-base intermediate with substrate in the catalytic mechanism.

It belongs to the KHG/KDPG aldolase family. Homotrimer.

It catalyses the reaction 2-dehydro-3-deoxy-6-phospho-D-gluconate = D-glyceraldehyde 3-phosphate + pyruvate. The protein operates within carbohydrate acid metabolism; 2-dehydro-3-deoxy-D-gluconate degradation; D-glyceraldehyde 3-phosphate and pyruvate from 2-dehydro-3-deoxy-D-gluconate: step 2/2. Involved in the degradation of glucose via the Entner-Doudoroff pathway. Catalyzes the reversible, stereospecific retro-aldol cleavage of 2-keto-3-deoxy-6-phosphogluconate (KDPG) to pyruvate and D-glyceraldehyde-3-phosphate. Involved in the degradation of 3,6-anhydro-L-galactose (L-AnG), which is the major monomeric sugar of red macroalgae. The cleavage of KDPG to glyceraldehyde 3-phosphate and pyruvate is the sixth step of this pathway. The polypeptide is 2-dehydro-3-deoxy-phosphogluconate aldolase (Pseudoalteromonas atlantica (strain T6c / ATCC BAA-1087)).